The following is a 177-amino-acid chain: ATP synthase subunit delta (177 aa).

Belongs to the ATPase delta chain family. F-type ATPases have 2 components, F(1) - the catalytic core - and F(0) - the membrane proton channel. F(1) has five subunits: alpha(3), beta(3), gamma(1), delta(1), epsilon(1). F(0) has three main subunits: a(1), b(2) and c(10-14). The alpha and beta chains form an alternating ring which encloses part of the gamma chain. F(1) is attached to F(0) by a central stalk formed by the gamma and epsilon chains, while a peripheral stalk is formed by the delta and b chains.

It localises to the cell inner membrane. Its function is as follows. F(1)F(0) ATP synthase produces ATP from ADP in the presence of a proton or sodium gradient. F-type ATPases consist of two structural domains, F(1) containing the extramembraneous catalytic core and F(0) containing the membrane proton channel, linked together by a central stalk and a peripheral stalk. During catalysis, ATP synthesis in the catalytic domain of F(1) is coupled via a rotary mechanism of the central stalk subunits to proton translocation. Functionally, this protein is part of the stalk that links CF(0) to CF(1). It either transmits conformational changes from CF(0) to CF(1) or is implicated in proton conduction. The chain is ATP synthase subunit delta from Pectobacterium atrosepticum (strain SCRI 1043 / ATCC BAA-672) (Erwinia carotovora subsp. atroseptica).